We begin with the raw amino-acid sequence, 100 residues long: NADH-quinone oxidoreductase subunit K (100 aa).

A run of 3 helical transmembrane segments spans residues 4-24 (LFHG…SLIV), 28-48 (ILFM…ALVV), and 60-80 (IMYI…LALL).

The protein belongs to the complex I subunit 4L family. As to quaternary structure, NDH-1 is composed of 13 different subunits. Subunits NuoA, H, J, K, L, M, N constitute the membrane sector of the complex.

The protein resides in the cell membrane. The enzyme catalyses a quinone + NADH + 5 H(+)(in) = a quinol + NAD(+) + 4 H(+)(out). Its function is as follows. NDH-1 shuttles electrons from NADH, via FMN and iron-sulfur (Fe-S) centers, to quinones in the respiratory chain. The immediate electron acceptor for the enzyme in this species is believed to be ubiquinone. Couples the redox reaction to proton translocation (for every two electrons transferred, four hydrogen ions are translocated across the cytoplasmic membrane), and thus conserves the redox energy in a proton gradient. This chain is NADH-quinone oxidoreductase subunit K, found in Buchnera aphidicola subsp. Schizaphis graminum (strain Sg).